Reading from the N-terminus, the 238-residue chain is Adenylate dimethylallyltransferase (238 aa).

It belongs to the isopentenyl transferase family.

It catalyses the reaction dimethylallyl diphosphate + AMP = N(6)-(dimethylallyl)adenosine 5'-phosphate + diphosphate. Its function is as follows. Transfers dimethylallyl groups to AMP as part of the biosynthesis of cytokinin phytohormones. This is Adenylate dimethylallyltransferase (tzs) from Ralstonia solanacearum (Pseudomonas solanacearum).